The following is a 117-amino-acid chain: DNA-directed RNA polymerase subunit omega (117 aa).

The segment covering 96–105 (KEEAEEEAKQ) has biased composition (basic and acidic residues). Residues 96-117 (KEEAEEEAKQKNSRAAKAAAAE) are disordered. The span at 108–117 (SRAAKAAAAE) shows a compositional bias: low complexity.

The protein belongs to the RNA polymerase subunit omega family. In terms of assembly, the RNAP catalytic core consists of 2 alpha, 1 beta, 1 beta' and 1 omega subunit. When a sigma factor is associated with the core the holoenzyme is formed, which can initiate transcription.

It carries out the reaction RNA(n) + a ribonucleoside 5'-triphosphate = RNA(n+1) + diphosphate. Functionally, promotes RNA polymerase assembly. Latches the N- and C-terminal regions of the beta' subunit thereby facilitating its interaction with the beta and alpha subunits. The chain is DNA-directed RNA polymerase subunit omega from Lactococcus lactis subsp. cremoris (strain SK11).